A 270-amino-acid polypeptide reads, in one-letter code: Indole-3-glycerol phosphate synthase (270 aa).

Belongs to the TrpC family.

The catalysed reaction is 1-(2-carboxyphenylamino)-1-deoxy-D-ribulose 5-phosphate + H(+) = (1S,2R)-1-C-(indol-3-yl)glycerol 3-phosphate + CO2 + H2O. It functions in the pathway amino-acid biosynthesis; L-tryptophan biosynthesis; L-tryptophan from chorismate: step 4/5. The polypeptide is Indole-3-glycerol phosphate synthase (Salinibacter ruber (strain DSM 13855 / M31)).